The sequence spans 867 residues: Putative ribosome biogenesis ATPase nvl (867 aa).

The interval 70–203 (LSSCESSENE…NNNNGNNKDN (134 aa)) is disordered. Residues 110–122 (EQLTSQYKQNIKN) are compositionally biased toward polar residues. Low complexity-rich tracts occupy residues 123–132 (TPPTTTTTTP), 141–172 (IPSN…TPNS), and 180–203 (NSSN…NKDN). Residue 257–264 (GPSGCGKT) participates in ATP binding. The interval 351–370 (SSNNSTNEPNEQTEQQQQQQ) is disordered. ATP is bound at residue 607–614 (GPPGCGKT). The span at 834 to 843 (DINKSRDKKP) shows a compositional bias: basic and acidic residues. The interval 834–855 (DINKSRDKKPNNSNNIPITNNI) is disordered. Residues 844 to 855 (NNSNNIPITNNI) are compositionally biased toward low complexity.

This sequence belongs to the AAA ATPase family.

It is found in the nucleus. The protein localises to the nucleolus. Its subcellular location is the nucleoplasm. Involved in ribosome biogenesis. The sequence is that of Putative ribosome biogenesis ATPase nvl (nvl) from Dictyostelium discoideum (Social amoeba).